A 147-amino-acid chain; its full sequence is Ribonuclease H (147 aa).

Residues 5 to 141 (ARKQITLYSD…CDELARNEAE (137 aa)) form the RNase H type-1 domain. Mg(2+) contacts are provided by Asp-14, Glu-52, Asp-74, and Asp-133.

This sequence belongs to the RNase H family. Monomer. Requires Mg(2+) as cofactor.

It is found in the cytoplasm. The enzyme catalyses Endonucleolytic cleavage to 5'-phosphomonoester.. Endonuclease that specifically degrades the RNA of RNA-DNA hybrids. This chain is Ribonuclease H, found in Sulfurovum sp. (strain NBC37-1).